We begin with the raw amino-acid sequence, 157 residues long: Protein Smg homolog (157 aa).

This sequence belongs to the Smg family.

This is Protein Smg homolog from Photobacterium profundum (strain SS9).